A 966-amino-acid chain; its full sequence is RNA polymerase-associated protein RapA (966 aa).

Residues 163–337 (EVGQRLHPRV…FARLKLLDAD (175 aa)) enclose the Helicase ATP-binding domain. ATP is bound at residue 176-183 (DEVGLGKT). The DEAH box signature appears at 283–286 (DEAH). Residues 488–642 (RVEWLITFLK…ICPMGMALFE (155 aa)) form the Helicase C-terminal domain.

The protein belongs to the SNF2/RAD54 helicase family. RapA subfamily. In terms of assembly, interacts with the RNAP. Has a higher affinity for the core RNAP than for the holoenzyme. Its ATPase activity is stimulated by binding to RNAP.

Transcription regulator that activates transcription by stimulating RNA polymerase (RNAP) recycling in case of stress conditions such as supercoiled DNA or high salt concentrations. Probably acts by releasing the RNAP, when it is trapped or immobilized on tightly supercoiled DNA. Does not activate transcription on linear DNA. Probably not involved in DNA repair. This is RNA polymerase-associated protein RapA from Actinobacillus succinogenes (strain ATCC 55618 / DSM 22257 / CCUG 43843 / 130Z).